Consider the following 49-residue polypeptide: Large ribosomal subunit protein bL33 (49 aa).

Belongs to the bacterial ribosomal protein bL33 family.

The polypeptide is Large ribosomal subunit protein bL33 (Lachnoclostridium phytofermentans (strain ATCC 700394 / DSM 18823 / ISDg) (Clostridium phytofermentans)).